The chain runs to 356 residues: sn-glycerol-3-phosphate import ATP-binding protein UgpC (356 aa).

Positions 4-235 (LKLQAVTKSW…PASRFVASFI (232 aa)) constitute an ABC transporter domain. 37 to 44 (GPSGCGKS) lines the ATP pocket.

This sequence belongs to the ABC transporter superfamily. sn-glycerol-3-phosphate importer (TC 3.A.1.1.3) family. In terms of assembly, the complex is composed of two ATP-binding proteins (UgpC), two transmembrane proteins (UgpA and UgpE) and a solute-binding protein (UgpB).

It is found in the cell inner membrane. It catalyses the reaction sn-glycerol 3-phosphate(out) + ATP + H2O = sn-glycerol 3-phosphate(in) + ADP + phosphate + H(+). Its function is as follows. Part of the ABC transporter complex UgpBAEC involved in sn-glycerol-3-phosphate (G3P) import. Responsible for energy coupling to the transport system. In Salmonella typhimurium (strain LT2 / SGSC1412 / ATCC 700720), this protein is sn-glycerol-3-phosphate import ATP-binding protein UgpC.